Here is a 600-residue protein sequence, read N- to C-terminus: Probable tripeptidyl-peptidase SED4 (600 aa).

The signal sequence occupies residues 1-22; the sequence is MVSFTLRAIGACLIGLPALITA. The propeptide at 23-202 is removed in mature form; it reads APTSHVSNDF…SVFTSDLEIT (180 aa). N-linked (GlcNAc...) asparagine glycosylation is found at N210 and N281. A Peptidase S53 domain is found at 212–600; the sequence is TITPDCIREL…FEKLSKLVLI (389 aa). Catalysis depends on charge relay system residues E288 and D292. N-linked (GlcNAc...) asparagine glycosylation is found at N323 and N404. S504 serves as the catalytic Charge relay system. The Ca(2+) site is built by D546 and I547. N575 carries N-linked (GlcNAc...) asparagine glycosylation. Ca(2+) is bound by residues G579 and D581.

Ca(2+) serves as cofactor.

Its subcellular location is the secreted. It localises to the extracellular space. The enzyme catalyses Release of an N-terminal tripeptide from a polypeptide.. Its function is as follows. Secreted tripeptidyl-peptidase which degrades proteins at acidic pHs and is involved in virulence. The protein is Probable tripeptidyl-peptidase SED4 (SED4) of Arthroderma benhamiae (strain ATCC MYA-4681 / CBS 112371) (Trichophyton mentagrophytes).